The primary structure comprises 338 residues: MDPESEGPAVITVTPLQQMFASCTGAILTSLMVTPFDVVKIRLQAQNNPFPKGKCFLYSNGLMDHLCVCEEEGNKAWYKKPGHFQGTLDAFLKIIRNEGIKSLWSGLPPTLVMAVPATVIYFTCYDQLTALLRSKLGENESRIPIVAGIVARLGAVTVISPLELIRTKMQSKKFSYEELHRFVSKKVSEDGWISLWRGWAPTILRDVPFSAMYWYNYEVLKKWLCAKSGLYEPTFMINFTSGALSGSFAAVVTLPFDVVKTQKQTQLWIYESQKISMPLQMSTWTIMKNIVAKNGFSGLFTGLIPRLIKIAPACAVMISTYEFGKSFFQKQNAQRQRY.

3 Solcar repeats span residues 13-131 (VTPL…LTAL), 139-223 (NESR…LKKW), and 233-327 (PTFM…GKSF). Transmembrane regions (helical) follow at residues 19–39 (MFASCTGAILTSLMVTPFDVV), 103–123 (LWSGLPPTLVMAVPATVIYFT), 145–165 (IVAGIVARLGAVTVISPLELI), 199–220 (WAPTILRDVPFSAMYWYNYEVL), 239–259 (FTSGALSGSFAAVVTLPFDVV), and 298–318 (GLFTGLIPRLIKIAPACAVMI).

Belongs to the mitochondrial carrier (TC 2.A.29) family.

Its subcellular location is the mitochondrion inner membrane. It carries out the reaction glutathione(in) = glutathione(out). Its function is as follows. Probable mitochondrial transporter required for glutathione import into mitochondria. Glutathione, which plays key roles in oxidative metabolism, is produced exclusively in the cytosol and is imported in many organelles. Mitochondrial glutathione is required for the activity and stability of proteins containing iron-sulfur clusters, as well as erythropoiesis. The sequence is that of Mitochondrial glutathione transporter SLC25A40 from Bos taurus (Bovine).